We begin with the raw amino-acid sequence, 304 residues long: UDP-3-O-acyl-N-acetylglucosamine deacetylase (304 aa).

Zn(2+) is bound by residues His78, His237, and Asp241. The Proton donor role is filled by His264.

This sequence belongs to the LpxC family. Requires Zn(2+) as cofactor.

The catalysed reaction is a UDP-3-O-[(3R)-3-hydroxyacyl]-N-acetyl-alpha-D-glucosamine + H2O = a UDP-3-O-[(3R)-3-hydroxyacyl]-alpha-D-glucosamine + acetate. It participates in glycolipid biosynthesis; lipid IV(A) biosynthesis; lipid IV(A) from (3R)-3-hydroxytetradecanoyl-[acyl-carrier-protein] and UDP-N-acetyl-alpha-D-glucosamine: step 2/6. Its function is as follows. Catalyzes the hydrolysis of UDP-3-O-myristoyl-N-acetylglucosamine to form UDP-3-O-myristoylglucosamine and acetate, the committed step in lipid A biosynthesis. This chain is UDP-3-O-acyl-N-acetylglucosamine deacetylase, found in Thioalkalivibrio sulfidiphilus (strain HL-EbGR7).